A 263-amino-acid polypeptide reads, in one-letter code: 4-hydroxy-tetrahydrodipicolinate reductase (263 aa).

Position 10-15 (10-15 (GASGKM)) interacts with NAD(+). Arg38 contacts NADP(+). Residues 97–99 (GTT) and 123–126 (APNF) contribute to the NAD(+) site. The active-site Proton donor/acceptor is the His153. His154 serves as a coordination point for (S)-2,3,4,5-tetrahydrodipicolinate. The Proton donor role is filled by Lys157. 163-164 (GT) serves as a coordination point for (S)-2,3,4,5-tetrahydrodipicolinate.

The protein belongs to the DapB family.

The protein resides in the cytoplasm. The enzyme catalyses (S)-2,3,4,5-tetrahydrodipicolinate + NAD(+) + H2O = (2S,4S)-4-hydroxy-2,3,4,5-tetrahydrodipicolinate + NADH + H(+). The catalysed reaction is (S)-2,3,4,5-tetrahydrodipicolinate + NADP(+) + H2O = (2S,4S)-4-hydroxy-2,3,4,5-tetrahydrodipicolinate + NADPH + H(+). It functions in the pathway amino-acid biosynthesis; L-lysine biosynthesis via DAP pathway; (S)-tetrahydrodipicolinate from L-aspartate: step 4/4. Catalyzes the conversion of 4-hydroxy-tetrahydrodipicolinate (HTPA) to tetrahydrodipicolinate. The chain is 4-hydroxy-tetrahydrodipicolinate reductase from Dehalococcoides mccartyi (strain ATCC BAA-2100 / JCM 16839 / KCTC 5957 / BAV1).